The primary structure comprises 149 residues: Calmodulin-1 (149 aa).

EF-hand domains are found at residues 8–43 (EQISEFKEAFSLFDKDGDGCITTKELGTVMRSLGQN), 44–79 (PTEAELQDMINEVDADGNGTIDFPEFLNLMAKKMKD), 81–116 (DSEEELKEAFRVFDKDQNGFISAAELRHVMTNLGEK), and 117–149 (LTDEEVEEMIREADVDGDGQINYEEFVKIMMAK). Ca(2+)-binding residues include Asp21, Asp23, Asp25, Cys27, Glu32, Asp57, Asp59, Asn61, Thr63, Glu68, Asp94, Asp96, Asn98, Glu105, Asp130, Asp132, Asp134, Gln136, and Glu141.

This sequence belongs to the calmodulin family. In terms of assembly, interacts with ZAR1 (via CaMBD domain). Binds to IQD1. Binds to MEE62 in a calcium-dependent manner.

It is found in the cytoplasm. It localises to the cell membrane. Its function is as follows. Calmodulin mediates the control of a large number of enzymes, ion channels and other proteins by Ca(2+). Among the enzymes to be stimulated by the calmodulin-Ca(2+) complex are a number of protein kinases and phosphatases. The protein is Calmodulin-1 (CAM1) of Arabidopsis thaliana (Mouse-ear cress).